The following is a 346-amino-acid chain: Annexin A1 (346 aa).

The residue at position 2 (Ala2) is an N-acetylalanine. Phosphoserine; by TRPM7 is present on Ser5. Gln19 participates in a covalent cross-link: Isoglutamyl lysine isopeptide (Gln-Lys) (interchain with K-?). Tyr21 carries the post-translational modification Phosphotyrosine. Phosphoserine; by PKC is present on Ser27. Ser34 and Ser37 each carry phosphoserine. Annexin repeat units lie at residues 42 to 113 (FNVS…AMLK), 114 to 185 (TPAQ…ALAK), 197 to 269 (DLAD…TIVK), and 273 to 344 (STPA…ALCG). Position 58 is an N6-acetyllysine (Lys58). Residues Gly59, Val60, Glu62, Arg97, Leu100, Glu105, Met127, Gly129, Gly131, Thr132, and Glu134 each coordinate Ca(2+). At Thr136 the chain carries Phosphothreonine. Ca(2+) contacts are provided by Asp171, Gly210, and Arg213. Lys214 participates in a covalent cross-link: Glycyl lysine isopeptide (Lys-Gly) (interchain with G-Cter in SUMO1); alternate. Lys214 is covalently cross-linked (Glycyl lysine isopeptide (Lys-Gly) (interchain with G-Cter in SUMO2); alternate). Ca(2+) contacts are provided by Gly215, Asp253, Glu255, and Leu256. A Glycyl lysine isopeptide (Lys-Gly) (interchain with G-Cter in SUMO1) cross-link involves residue Lys257. Residues Glu261, Met286, Gly288, and Gly290 each coordinate Ca(2+). The residue at position 312 (Lys312) is an N6-acetyllysine. A disulfide bridge connects residues Cys324 and Cys343. Residues Leu328, Glu330, and Thr331 each coordinate Ca(2+). Lys332 participates in a covalent cross-link: Glycyl lysine isopeptide (Lys-Gly) (interchain with G-Cter in SUMO1). Glu336 lines the Ca(2+) pocket.

The protein belongs to the annexin family. In terms of assembly, homodimer; non-covalently linked. Homodimer; linked by transglutamylation. Homodimers linked by transglutamylation are observed in placenta, but not in other tissues. Interacts with S100A11. Heterotetramer, formed by two molecules each of S100A11 and ANXA1. Interacts with DYSF. Interacts with EGFR. Phosphorylated by protein kinase C, EGFR and TRPM7. Phosphorylated in response to EGF treatment. Post-translationally, sumoylated. In terms of processing, proteolytically cleaved by cathepsin CTSG to release the active N-terminal peptide Ac2-26. As to expression, detected in lung. Detected at the apical membrane of airway epithelial cells. Detected in intestinal epithelial cells. Detected in skeletal muscle. Detected in prostate. Detected in thymus (at protein level). Detected in stomach, lung, spleen, ovary and uterus, and at lower levels in kidney, thymus and heart.

Its subcellular location is the nucleus. The protein resides in the cytoplasm. It localises to the cell projection. It is found in the cilium. The protein localises to the basolateral cell membrane. Its subcellular location is the lateral cell membrane. The protein resides in the cell membrane. It localises to the apical cell membrane. It is found in the membrane. The protein localises to the early endosome. Its subcellular location is the cytoplasmic vesicle membrane. The protein resides in the endosome membrane. It localises to the secreted. It is found in the extracellular space. The protein localises to the extracellular exosome. Its subcellular location is the cytoplasmic vesicle. The protein resides in the secretory vesicle lumen. It localises to the phagocytic cup. Its function is as follows. Plays important roles in the innate immune response as effector of glucocorticoid-mediated responses and regulator of the inflammatory process. Has anti-inflammatory activity. Plays a role in glucocorticoid-mediated down-regulation of the early phase of the inflammatory response. Contributes to the adaptive immune response by enhancing signaling cascades that are triggered by T-cell activation, regulates differentiation and proliferation of activated T-cells. Promotes the differentiation of T-cells into Th1 cells and negatively regulates differentiation into Th2 cells. Has no effect on unstimulated T-cells. Negatively regulates hormone exocytosis via activation of the formyl peptide receptors and reorganization of the actin cytoskeleton. Has high affinity for Ca(2+) and can bind up to eight Ca(2+) ions. Displays Ca(2+)-dependent binding to phospholipid membranes. Plays a role in the formation of phagocytic cups and phagosomes. Plays a role in phagocytosis by mediating the Ca(2+)-dependent interaction between phagosomes and the actin cytoskeleton. Functions at least in part by activating the formyl peptide receptors and downstream signaling cascades. Promotes chemotaxis of granulocytes and monocytes via activation of the formyl peptide receptors. Promotes rearrangement of the actin cytoskeleton, cell polarization and cell migration. Promotes resolution of inflammation and wound healing. Acts via neutrophil N-formyl peptide receptors to enhance the release of CXCL2. In Mus musculus (Mouse), this protein is Annexin A1 (Anxa1).